The sequence spans 119 residues: Large ribosomal subunit protein uL18 (119 aa).

It belongs to the universal ribosomal protein uL18 family. Part of the 50S ribosomal subunit; part of the 5S rRNA/L5/L18/L25 subcomplex. Contacts the 5S and 23S rRNAs.

Its function is as follows. This is one of the proteins that bind and probably mediate the attachment of the 5S RNA into the large ribosomal subunit, where it forms part of the central protuberance. The chain is Large ribosomal subunit protein uL18 from Chlorobium luteolum (strain DSM 273 / BCRC 81028 / 2530) (Pelodictyon luteolum).